The primary structure comprises 392 residues: UPF0229 protein CPF_1540 (392 aa).

The interval 75–100 (VTTGTGEERRGDRISSDKRKAISNNK) is disordered. Basic and acidic residues predominate over residues 80–94 (GEERRGDRISSDKRK).

This sequence belongs to the UPF0229 family.

The chain is UPF0229 protein CPF_1540 from Clostridium perfringens (strain ATCC 13124 / DSM 756 / JCM 1290 / NCIMB 6125 / NCTC 8237 / Type A).